A 337-amino-acid chain; its full sequence is 1,4-dihydroxy-2-naphthoyl-CoA synthase, peroxisomal (337 aa).

Substrate is bound by residues 97–98, Lys133, 137–141, 181–185, Thr207, and Ser213; these read RR, SGGDQ, and YAVGG. 206-208 is a hydrogencarbonate binding site; sequence QTG.

It belongs to the enoyl-CoA hydratase/isomerase family. MenB subfamily. Homohexamer. Hydrogencarbonate serves as cofactor.

The protein resides in the peroxisome. It carries out the reaction 2-succinylbenzoyl-CoA + H(+) = 1,4-dihydroxy-2-naphthoyl-CoA + H2O. In terms of biological role, involved in the biosynthesis of phylloquinone (vitamin K1). Converts o-succinylbenzoyl-CoA (OSB-CoA) to 1,4-dihydroxy-2-naphthoyl-CoA (DHNA-CoA). The protein is 1,4-dihydroxy-2-naphthoyl-CoA synthase, peroxisomal (MENB) of Arabidopsis thaliana (Mouse-ear cress).